Consider the following 190-residue polypeptide: NADH dehydrogenase [ubiquinone] iron-sulfur protein 3 (190 aa).

It belongs to the complex I 30 kDa subunit family. Complex I is composed of about 45 different subunits. This is a component of the iron-sulfur (IP) fragment of the enzyme.

It is found in the mitochondrion inner membrane. It catalyses the reaction a ubiquinone + NADH + 5 H(+)(in) = a ubiquinol + NAD(+) + 4 H(+)(out). In terms of biological role, core subunit of the mitochondrial membrane respiratory chain NADH dehydrogenase (Complex I) that is believed to belong to the minimal assembly required for catalysis. Complex I functions in the transfer of electrons from NADH to the respiratory chain. The immediate electron acceptor for the enzyme is believed to be ubiquinone. This chain is NADH dehydrogenase [ubiquinone] iron-sulfur protein 3 (NAD9), found in Solanum tuberosum (Potato).